A 57-amino-acid chain; its full sequence is Small ribosomal subunit protein eS27 (57 aa).

4 residues coordinate Zn(2+): Cys-10, Cys-13, Cys-29, and Cys-32. The C4-type zinc finger occupies 10 to 32 (CPDCENEQTVFGKASTEVACAVC).

It belongs to the eukaryotic ribosomal protein eS27 family. As to quaternary structure, part of the 30S ribosomal subunit. Zn(2+) serves as cofactor.

The sequence is that of Small ribosomal subunit protein eS27 from Halobacterium salinarum (strain ATCC 29341 / DSM 671 / R1).